A 196-amino-acid chain; its full sequence is Large ribosomal subunit protein eL15 (196 aa).

A disordered region spans residues 154–196 (PGHRGRSERGLTSAGVKGRGMRRRGKGTEKCRPSVRANANRAK).

This sequence belongs to the eukaryotic ribosomal protein eL15 family.

This is Large ribosomal subunit protein eL15 from Methanospirillum hungatei JF-1 (strain ATCC 27890 / DSM 864 / NBRC 100397 / JF-1).